The primary structure comprises 214 residues: Holliday junction branch migration complex subunit RuvA (214 aa).

Positions 1 to 63 (MIASLSGTVE…EDALTLYGFA (63 aa)) are domain I. The interval 64-142 (DRDEREVFEV…PTGEPVPGAE (79 aa)) is domain II. The flexible linker stretch occupies residues 143-151 (AEASDEPAV). Residues 151 to 214 (VETVWHADVV…GMAGAVRGGR (64 aa)) are domain III.

This sequence belongs to the RuvA family. As to quaternary structure, homotetramer. Forms an RuvA(8)-RuvB(12)-Holliday junction (HJ) complex. HJ DNA is sandwiched between 2 RuvA tetramers; dsDNA enters through RuvA and exits via RuvB. An RuvB hexamer assembles on each DNA strand where it exits the tetramer. Each RuvB hexamer is contacted by two RuvA subunits (via domain III) on 2 adjacent RuvB subunits; this complex drives branch migration. In the full resolvosome a probable DNA-RuvA(4)-RuvB(12)-RuvC(2) complex forms which resolves the HJ.

The protein localises to the cytoplasm. The RuvA-RuvB-RuvC complex processes Holliday junction (HJ) DNA during genetic recombination and DNA repair, while the RuvA-RuvB complex plays an important role in the rescue of blocked DNA replication forks via replication fork reversal (RFR). RuvA specifically binds to HJ cruciform DNA, conferring on it an open structure. The RuvB hexamer acts as an ATP-dependent pump, pulling dsDNA into and through the RuvAB complex. HJ branch migration allows RuvC to scan DNA until it finds its consensus sequence, where it cleaves and resolves the cruciform DNA. The chain is Holliday junction branch migration complex subunit RuvA from Micrococcus luteus (strain ATCC 4698 / DSM 20030 / JCM 1464 / CCM 169 / CCUG 5858 / IAM 1056 / NBRC 3333 / NCIMB 9278 / NCTC 2665 / VKM Ac-2230) (Micrococcus lysodeikticus).